We begin with the raw amino-acid sequence, 397 residues long: uncharacterized protein (397 aa).

The next 4 membrane-spanning stretches (helical) occupy residues 255–275 (LLTY…ICYA), 284–304 (MITF…VLLA), 308–328 (LITA…PLPL), and 370–390 (VLLV…YCLG).

It localises to the cell membrane. This is an uncharacterized protein from Methanocaldococcus jannaschii (strain ATCC 43067 / DSM 2661 / JAL-1 / JCM 10045 / NBRC 100440) (Methanococcus jannaschii).